Here is an 810-residue protein sequence, read N- to C-terminus: AMP deaminase (810 aa).

The span at 1-10 shows a compositional bias: polar residues; that stretch reads MDNQATQRLN. Disordered stretches follow at residues 1 to 61 and 114 to 137; these read MDNQ…SHES and AAMNKGHDSADHASQNSGGKPRTL. Serine 19, serine 58, and serine 61 each carry phosphoserine. Positions 125-137 are enriched in polar residues; sequence HASQNSGGKPRTL. Phosphoserine is present on serine 138. Residues histidine 362 and histidine 364 each coordinate Zn(2+). Substrate is bound by residues histidine 364 and 433-438; that span reads KFNLKY. Residue histidine 630 participates in Zn(2+) binding. Residue glutamate 633 coordinates substrate. Histidine 652 serves as the catalytic Proton acceptor. Residue aspartate 707 coordinates Zn(2+). Position 708 to 711 (708 to 711) interacts with substrate; the sequence is DPLQ.

It belongs to the metallo-dependent hydrolases superfamily. Adenosine and AMP deaminases family. As to quaternary structure, homotetramer. It depends on Zn(2+) as a cofactor.

It catalyses the reaction AMP + H2O + H(+) = IMP + NH4(+). The protein operates within purine metabolism; IMP biosynthesis via salvage pathway; IMP from AMP: step 1/1. AMP deaminase plays a critical role in energy metabolism. The protein is AMP deaminase (AMD1) of Saccharomyces cerevisiae (strain ATCC 204508 / S288c) (Baker's yeast).